We begin with the raw amino-acid sequence, 434 residues long: Glutamyl-tRNA reductase (434 aa).

Residues 52–55 (TCNR), serine 115, 120–122 (ETQ), and glutamine 126 contribute to the substrate site. Cysteine 53 acts as the Nucleophile in catalysis. An NADP(+)-binding site is contributed by 195 to 200 (GAGEMI).

It belongs to the glutamyl-tRNA reductase family. In terms of assembly, homodimer.

The enzyme catalyses (S)-4-amino-5-oxopentanoate + tRNA(Glu) + NADP(+) = L-glutamyl-tRNA(Glu) + NADPH + H(+). It functions in the pathway porphyrin-containing compound metabolism; protoporphyrin-IX biosynthesis; 5-aminolevulinate from L-glutamyl-tRNA(Glu): step 1/2. Functionally, catalyzes the NADPH-dependent reduction of glutamyl-tRNA(Glu) to glutamate 1-semialdehyde (GSA). In Cupriavidus necator (strain ATCC 17699 / DSM 428 / KCTC 22496 / NCIMB 10442 / H16 / Stanier 337) (Ralstonia eutropha), this protein is Glutamyl-tRNA reductase.